Here is a 122-residue protein sequence, read N- to C-terminus: Large ribosomal subunit protein uL14 (122 aa).

Belongs to the universal ribosomal protein uL14 family. Part of the 50S ribosomal subunit. Forms a cluster with proteins L3 and L19. In the 70S ribosome, L14 and L19 interact and together make contacts with the 16S rRNA in bridges B5 and B8.

Binds to 23S rRNA. Forms part of two intersubunit bridges in the 70S ribosome. The polypeptide is Large ribosomal subunit protein uL14 (Pediococcus pentosaceus (strain ATCC 25745 / CCUG 21536 / LMG 10740 / 183-1w)).